Here is a 448-residue protein sequence, read N- to C-terminus: tRNA-2-methylthio-N(6)-dimethylallyladenosine synthase (448 aa).

One can recognise an MTTase N-terminal domain in the interval 3-118 (KKVFIKTFGC…LPELLNARAA (116 aa)). Residues cysteine 12, cysteine 49, cysteine 81, cysteine 155, cysteine 159, and cysteine 162 each contribute to the [4Fe-4S] cluster site. Residues 141–374 (RVEGASAFVS…QAVINRNILE (234 aa)) form the Radical SAM core domain. The TRAM domain occupies 377–440 (QERVGTVQRL…TYTLRGEVVM (64 aa)).

This sequence belongs to the methylthiotransferase family. MiaB subfamily. In terms of assembly, monomer. [4Fe-4S] cluster serves as cofactor.

The protein localises to the cytoplasm. It carries out the reaction N(6)-dimethylallyladenosine(37) in tRNA + (sulfur carrier)-SH + AH2 + 2 S-adenosyl-L-methionine = 2-methylsulfanyl-N(6)-dimethylallyladenosine(37) in tRNA + (sulfur carrier)-H + 5'-deoxyadenosine + L-methionine + A + S-adenosyl-L-homocysteine + 2 H(+). Catalyzes the methylthiolation of N6-(dimethylallyl)adenosine (i(6)A), leading to the formation of 2-methylthio-N6-(dimethylallyl)adenosine (ms(2)i(6)A) at position 37 in tRNAs that read codons beginning with uridine. The sequence is that of tRNA-2-methylthio-N(6)-dimethylallyladenosine synthase from Acidovorax sp. (strain JS42).